Consider the following 225-residue polypeptide: UPF0700 transmembrane protein YoaK (225 aa).

Helical transmembrane passes span 10 to 30 (LLSLLCLTAGIVDVIGYLSLG), 56 to 76 (VFNSLTALIGFICGVIIATLM), 99 to 119 (ILFVFACLSFYRAFVPVHILI), 137 to 157 (GIAGISSTVLTGTLASLLEDI), 174 to 194 (TVLRALAIILYCVGAIIVALA), and 197 to 217 (DFYHFIIWVPIVLIFGIMMTA).

This sequence belongs to the UPF0700 family.

It localises to the cell membrane. The chain is UPF0700 transmembrane protein YoaK (yoaK) from Bacillus subtilis (strain 168).